We begin with the raw amino-acid sequence, 245 residues long: Dehydrogenase/reductase SDR family member 6 (245 aa).

NAD(+)-binding positions include Gln-16–Ile-18, Asp-37, and Asp-58. Residue Arg-144 coordinates substrate. Catalysis depends on Tyr-147, which acts as the Proton acceptor. NAD(+) is bound by residues Lys-151 and Val-180–Ser-184. Residues Arg-188 and Arg-205 each contribute to the substrate site.

This sequence belongs to the short-chain dehydrogenases/reductases (SDR) family. Homotetramer.

Its subcellular location is the cytoplasm. The catalysed reaction is cis-4-hydroxy-L-proline + NAD(+) = 4-oxo-L-proline + NADH + H(+). The enzyme catalyses (R)-3-hydroxybutanoate + NAD(+) = acetoacetate + NADH + H(+). Its pathway is amino-acid metabolism. It functions in the pathway siderophore biosynthesis. Its function is as follows. NAD(H)-dependent dehydrogenase/reductase with a preference for cyclic substrates. Catalyzes stereoselective conversion of 4-oxo-L-proline to cis-4-hydroxy-L-proline, likely a detoxification mechanism for ketoprolines. Mediates the formation of 2,5-dihydroxybenzoate (2,5-DHBA), a siderophore that chelates free cytoplasmic iron, thereby regulating iron transport and homeostasis while protecting cells against free radical-induced oxidative stress. The iron-siderophore complex is imported into mitochondria, providing an iron source for mitochondrial metabolic processes in particular heme synthesis. May act as a 3-hydroxybutyrate dehydrogenase. This chain is Dehydrogenase/reductase SDR family member 6 (bdh2), found in Danio rerio (Zebrafish).